Here is a 316-residue protein sequence, read N- to C-terminus: 4-hydroxyphenylacetate decarboxylase activating enzyme (316 aa).

The Radical SAM core domain maps to 20–307 (HDGPGCRTTV…QDIFLDNGIA (288 aa)). Positions 34, 38, 41, 60, 66, 69, and 105 each coordinate [4Fe-4S] cluster. S-adenosyl-L-methionine is bound at residue 40-42 (WCA). The 4Fe-4S ferredoxin-type domain maps to 84 to 115 (NKPVIDWNICKDCESFECVNSCYYNAFKLCAK). S-adenosyl-L-methionine-binding positions include Gly-144, 193–195 (DIK), and His-267.

Belongs to the organic radical-activating enzymes family. In terms of assembly, monomer. It depends on [4Fe-4S] cluster as a cofactor.

The enzyme catalyses glycyl-[protein] + reduced [flavodoxin] + S-adenosyl-L-methionine = glycin-2-yl radical-[protein] + semiquinone [flavodoxin] + 5'-deoxyadenosine + L-methionine + H(+). Functionally, catalyzes activation of 4-hydroxyphenylacetate decarboxylase under anaerobic conditions by generation of an organic free radical on a glycine residue, via a homolytic cleavage of S-adenosyl-L-methionine (SAM). This Clostridioides difficile (strain 630) (Peptoclostridium difficile) protein is 4-hydroxyphenylacetate decarboxylase activating enzyme.